The primary structure comprises 302 residues: Acetylglutamate kinase (302 aa).

Substrate contacts are provided by residues 68–69, arginine 90, and asparagine 194; that span reads GG.

Belongs to the acetylglutamate kinase family. ArgB subfamily.

It is found in the cytoplasm. The catalysed reaction is N-acetyl-L-glutamate + ATP = N-acetyl-L-glutamyl 5-phosphate + ADP. It participates in amino-acid biosynthesis; L-arginine biosynthesis; N(2)-acetyl-L-ornithine from L-glutamate: step 2/4. Catalyzes the ATP-dependent phosphorylation of N-acetyl-L-glutamate. In Acinetobacter baumannii (strain AB307-0294), this protein is Acetylglutamate kinase.